The primary structure comprises 129 residues: Large ribosomal subunit protein bL19c (129 aa).

This sequence belongs to the bacterial ribosomal protein bL19 family.

The protein resides in the plastid. In Prototheca wickerhamii, this protein is Large ribosomal subunit protein bL19c.